Reading from the N-terminus, the 196-residue chain is Imidazole glycerol phosphate synthase subunit HisH (196 aa).

Residues D2 to M196 form the Glutamine amidotransferase type-1 domain. Catalysis depends on C77, which acts as the Nucleophile. Active-site residues include H178 and E180.

Heterodimer of HisH and HisF.

It is found in the cytoplasm. The enzyme catalyses 5-[(5-phospho-1-deoxy-D-ribulos-1-ylimino)methylamino]-1-(5-phospho-beta-D-ribosyl)imidazole-4-carboxamide + L-glutamine = D-erythro-1-(imidazol-4-yl)glycerol 3-phosphate + 5-amino-1-(5-phospho-beta-D-ribosyl)imidazole-4-carboxamide + L-glutamate + H(+). It carries out the reaction L-glutamine + H2O = L-glutamate + NH4(+). It participates in amino-acid biosynthesis; L-histidine biosynthesis; L-histidine from 5-phospho-alpha-D-ribose 1-diphosphate: step 5/9. In terms of biological role, IGPS catalyzes the conversion of PRFAR and glutamine to IGP, AICAR and glutamate. The HisH subunit catalyzes the hydrolysis of glutamine to glutamate and ammonia as part of the synthesis of IGP and AICAR. The resulting ammonia molecule is channeled to the active site of HisF. In Yersinia pestis, this protein is Imidazole glycerol phosphate synthase subunit HisH.